A 691-amino-acid chain; its full sequence is Elongation factor G (691 aa).

A tr-type G domain is found at 8–282 (ERVRNIGIAA…AVVDYLPAPI (275 aa)). GTP contacts are provided by residues 17–24 (AHIDAGKT), 81–85 (DTPGH), and 135–138 (NKMD).

This sequence belongs to the TRAFAC class translation factor GTPase superfamily. Classic translation factor GTPase family. EF-G/EF-2 subfamily.

It localises to the cytoplasm. Catalyzes the GTP-dependent ribosomal translocation step during translation elongation. During this step, the ribosome changes from the pre-translocational (PRE) to the post-translocational (POST) state as the newly formed A-site-bound peptidyl-tRNA and P-site-bound deacylated tRNA move to the P and E sites, respectively. Catalyzes the coordinated movement of the two tRNA molecules, the mRNA and conformational changes in the ribosome. This chain is Elongation factor G, found in Synechococcus sp. (strain CC9311).